Here is a 631-residue protein sequence, read N- to C-terminus: MDYSFDTTAEDPWVRISDCIKNLFSPIMSENPGHMPLQPNASLSEEDGTQGHPDGNPPKLDTANGTPKVYKSADRSTVKKGPPVAPKPAWFRQSLKGLRNRASDPRGLPDPALSTQPAPASREHLGPHIRASSSSSSIKQRISSFETFGSSQLPDKGAQRLSLQPSSGEAAKPLGKHEGGRFSGLLGRGAAPTLVPQQPEQVLPSGSPAATEARDPGVSESPPPGLQPNQKTLPTGSDPLLRLLSTQTEKSQGPVLKMPSQRARSFPLTRSQSCETKLLDEKTSKLYSISSQVSSAVMKSLLCLPSSLSCAQTPCIPKEGASPTSSSNEDSAANGSAETSASDTGFSLNLSELREYTEGLTEAKEDDDGDHSSHQSGQSVISLLSSEELKQLIEEVKVLDEATLKQLDSIHVTILHKEEGAGLGFSLAGGADLENKVITVHKVFPNGLASQEGTIQKGNEVLSINGKSLKGTTHNDALAILRQAREPRQAVIVTRKLTAESMPDLNSTTDSAASASAASDVSVESSAEATVYTVTLEKMSAGLGFSLEGGKGSLHGDKPLTINRIFKGAASEQSETIQPGDEILQLAGTAMQGLTRFEAWNIIKALPDGPVTIVIRRKSLQPKETTAAADS.

Disordered regions lie at residues 30-269 and 317-344; these read ENPG…FPLT and PKEG…ASDT. Positions 132-144 are enriched in low complexity; the sequence is SSSSSSIKQRISS. Phosphoserine is present on Ser221. Over residues 322-344 the composition is skewed to polar residues; that stretch reads SPTSSSNEDSAANGSAETSASDT. The tract at residues 405–501 is interaction with PPP1R12A, PPP1R12B and PPP1R12C; sequence KQLDSIHVTI…IVTRKLTAES (97 aa). PDZ domains lie at 411 to 496 and 533 to 618; these read HVTI…VTRK and TVTL…IRRK.

In terms of assembly, homotetramer. Pro-interleukin-16 interacts (via PDZ 2 domain) with PPP1R12A, PPP1R12B and PPP1R12C. Pro-interleukin-16 interacts with GRIN2A. Pro-interleukin-16 interacts with GABPB1. Pro-interleukin-16 interacts (via PDZ 3 domain) with HDAC3.

The protein localises to the secreted. It is found in the cytoplasm. It localises to the nucleus. Its function is as follows. Interleukin-16 stimulates a migratory response in CD4+ lymphocytes, monocytes, and eosinophils. Primes CD4+ T-cells for IL-2 and IL-15 responsiveness. Also induces T-lymphocyte expression of interleukin 2 receptor. Ligand for CD4. Pro-interleukin-16 is involved in cell cycle progression in T-cells. Appears to be involved in transcriptional regulation of SKP2 and is probably part of a transcriptional repression complex on the core promoter of the SKP2 gene. May act as a scaffold for GABPB1 (the DNA-binding subunit the GABP transcription factor complex) and HDAC3 thus maintaining transcriptional repression and blocking cell cycle progression in resting T-cells. The chain is Pro-interleukin-16 (IL16) from Chlorocebus aethiops (Green monkey).